The sequence spans 204 residues: Holliday junction branch migration complex subunit RuvA (204 aa).

Residues 1–64 are domain I; the sequence is MIGKLKGTID…EDQLKLFGFM (64 aa). The segment at 65–143 is domain II; that stretch reads TALEREWFNL…AFAGEAINIA (79 aa). The segment at 144-151 is flexible linker; that stretch reads LKQELGEG. A domain III region spans residues 152–204; that stretch reads VAAAPVADAVSALTNLGYSRDQAANAVAAAMKTAGDGADSAKLIRLGLKELAR.

This sequence belongs to the RuvA family. Homotetramer. Forms an RuvA(8)-RuvB(12)-Holliday junction (HJ) complex. HJ DNA is sandwiched between 2 RuvA tetramers; dsDNA enters through RuvA and exits via RuvB. An RuvB hexamer assembles on each DNA strand where it exits the tetramer. Each RuvB hexamer is contacted by two RuvA subunits (via domain III) on 2 adjacent RuvB subunits; this complex drives branch migration. In the full resolvosome a probable DNA-RuvA(4)-RuvB(12)-RuvC(2) complex forms which resolves the HJ.

It localises to the cytoplasm. Functionally, the RuvA-RuvB-RuvC complex processes Holliday junction (HJ) DNA during genetic recombination and DNA repair, while the RuvA-RuvB complex plays an important role in the rescue of blocked DNA replication forks via replication fork reversal (RFR). RuvA specifically binds to HJ cruciform DNA, conferring on it an open structure. The RuvB hexamer acts as an ATP-dependent pump, pulling dsDNA into and through the RuvAB complex. HJ branch migration allows RuvC to scan DNA until it finds its consensus sequence, where it cleaves and resolves the cruciform DNA. The chain is Holliday junction branch migration complex subunit RuvA from Rhizobium etli (strain CIAT 652).